A 153-amino-acid chain; its full sequence is NAD(P)H-quinone oxidoreductase subunit N (153 aa).

Belongs to the complex I NdhN subunit family. As to quaternary structure, NDH-1 can be composed of about 15 different subunits; different subcomplexes with different compositions have been identified which probably have different functions.

It is found in the cellular thylakoid membrane. It catalyses the reaction a plastoquinone + NADH + (n+1) H(+)(in) = a plastoquinol + NAD(+) + n H(+)(out). The enzyme catalyses a plastoquinone + NADPH + (n+1) H(+)(in) = a plastoquinol + NADP(+) + n H(+)(out). NDH-1 shuttles electrons from an unknown electron donor, via FMN and iron-sulfur (Fe-S) centers, to quinones in the respiratory and/or the photosynthetic chain. The immediate electron acceptor for the enzyme in this species is believed to be plastoquinone. Couples the redox reaction to proton translocation, and thus conserves the redox energy in a proton gradient. Cyanobacterial NDH-1 also plays a role in inorganic carbon-concentration. This chain is NAD(P)H-quinone oxidoreductase subunit N, found in Prochlorococcus marinus (strain MIT 9211).